The primary structure comprises 257 residues: Nuclear receptor subfamily 0 group B member 2 (257 aa).

An NR LBD domain is found at 16 to 257 (SRPAILYALL…GLLGDMLLLR (242 aa)). Symmetric dimethylarginine; by PRMT5 is present on Arg57.

This sequence belongs to the nuclear hormone receptor family. NR0 subfamily. Interacts (via N-terminus) with NEUROD1 (via N-terminus and C-terminus). Interacts with ID2. Interacts with RORG, NFIL3, NR1D1 and BHLHE41. Heterodimer; efficient DNA binding requires dimerization with another bHLH protein. Interacts with RARA, RXRA, THRB, NR5A1, NR5A2, NR1I3, PPARA, PPARG and EID1. Interacts with HNF4A; the resulting heterodimer is transcriptionally inactive. Interacts with DDX3X; this interaction disrupts the interaction between HNF4 and NR0B2/SHP that forms inactive heterodimers and enhances the formation of active HNF4 homodimers. Arginine methylation by PRMT5 enhances repression activity of metabolic genes in liver in response to bile acid signaling, by increasing interaction with cofactors. As to expression, liver. Low levels of expression were detected in heart and pancreas.

It localises to the nucleus. The protein resides in the cytoplasm. Transcriptional regulator that acts as a negative regulator of receptor-dependent signaling pathways. Specifically inhibits transactivation of the nuclear receptor with which it interacts. Inhibits transcriptional activity of NEUROD1 on E-box-containing promoter by interfering with the coactivation function of the p300/CBP-mediated transcription complex for NEUROD1. Essential component of the liver circadian clock which via its interaction with NR1D1 and RORG regulates NPAS2-mediated hepatic lipid metabolism. Regulates the circadian expression of cytochrome P450 (CYP) enzymes. Represses: NR5A2 and HNF4A to down-regulate CYP2C38, NFLI3 to up-regulate CYP2A5, BHLHE41/HNF1A axis to up-regulate CYP1A2, CYP2E1 and CYP3A11, and NR1D1 to up-regulate CYP2B10, CYP4A10 and CYP4A14. This Homo sapiens (Human) protein is Nuclear receptor subfamily 0 group B member 2 (NR0B2).